Consider the following 276-residue polypeptide: Dermonecrotic toxin LlSicTox-alphaIV1i (276 aa).

His-5 is an active-site residue. The Mg(2+) site is built by Glu-25 and Asp-27. Residue His-41 is the Nucleophile of the active site. 2 cysteine pairs are disulfide-bonded: Cys-45-Cys-51 and Cys-47-Cys-193. Asp-85 lines the Mg(2+) pocket.

Belongs to the arthropod phospholipase D family. Class II subfamily. Mg(2+) serves as cofactor. As to expression, expressed by the venom gland.

It localises to the secreted. It carries out the reaction an N-(acyl)-sphingosylphosphocholine = an N-(acyl)-sphingosyl-1,3-cyclic phosphate + choline. It catalyses the reaction an N-(acyl)-sphingosylphosphoethanolamine = an N-(acyl)-sphingosyl-1,3-cyclic phosphate + ethanolamine. The enzyme catalyses a 1-acyl-sn-glycero-3-phosphocholine = a 1-acyl-sn-glycero-2,3-cyclic phosphate + choline. The catalysed reaction is a 1-acyl-sn-glycero-3-phosphoethanolamine = a 1-acyl-sn-glycero-2,3-cyclic phosphate + ethanolamine. In terms of biological role, dermonecrotic toxins cleave the phosphodiester linkage between the phosphate and headgroup of certain phospholipids (sphingolipid and lysolipid substrates), forming an alcohol (often choline) and a cyclic phosphate. This toxin acts on sphingomyelin (SM). It may also act on ceramide phosphoethanolamine (CPE), lysophosphatidylcholine (LPC) and lysophosphatidylethanolamine (LPE), but not on lysophosphatidylserine (LPS), and lysophosphatidylglycerol (LPG). It acts by transphosphatidylation, releasing exclusively cyclic phosphate products as second products. Induces dermonecrosis, hemolysis, increased vascular permeability, edema, inflammatory response, and platelet aggregation. In Loxosceles laeta (South American recluse spider), this protein is Dermonecrotic toxin LlSicTox-alphaIV1i.